Consider the following 503-residue polypeptide: Probable 2-isopropylmalate synthase (503 aa).

Residues Ile-8–Phe-259 form the Pyruvate carboxyltransferase domain. A divalent metal cation contacts are provided by Asp-17, His-197, His-199, and Asn-233.

It belongs to the alpha-IPM synthase/homocitrate synthase family. In terms of assembly, homodimer. It depends on a divalent metal cation as a cofactor.

The catalysed reaction is 3-methyl-2-oxobutanoate + acetyl-CoA + H2O = (2S)-2-isopropylmalate + CoA + H(+). The protein operates within amino-acid biosynthesis; L-leucine biosynthesis; L-leucine from 3-methyl-2-oxobutanoate: step 1/4. Functionally, catalyzes the condensation of the acetyl group of acetyl-CoA with 3-methyl-2-oxobutanoate (2-oxoisovalerate) to form 3-carboxy-3-hydroxy-4-methylpentanoate (2-isopropylmalate). The polypeptide is Probable 2-isopropylmalate synthase (leuA) (Archaeoglobus fulgidus (strain ATCC 49558 / DSM 4304 / JCM 9628 / NBRC 100126 / VC-16)).